Here is a 319-residue protein sequence, read N- to C-terminus: Aminoimidazole riboside kinase (319 aa).

Residues aspartate 16, glycine 31, and tyrosine 101 each contribute to the 5-amino-1-(beta-D-ribosyl)imidazole site. Position 158-160 (158-160 (DVN)) interacts with ATP. A 5-amino-1-(beta-D-ribosyl)imidazole-binding site is contributed by arginine 162. K(+) contacts are provided by alanine 180, alanine 181, and alanine 183. ATP is bound by residues lysine 187 and glutamate 192. Glycine 213 is a K(+) binding site. 220-225 (SLGADG) is a binding site for ATP. Residues aspartate 246 and threonine 248 each contribute to the K(+) site. Aspartate 252 is a binding site for 5-amino-1-(beta-D-ribosyl)imidazole. Aspartate 252 (proton acceptor) is an active-site residue. An ATP-binding site is contributed by asparagine 281. The K(+) site is built by alanine 287, alanine 290, and glycine 292.

The protein belongs to the carbohydrate kinase PfkB family. As to quaternary structure, homodimer.

It catalyses the reaction 5-amino-1-(beta-D-ribosyl)imidazole + ATP = 5-amino-1-(5-phospho-beta-D-ribosyl)imidazole + ADP + H(+). Potassium may regulate kinase activity. In terms of biological role, phosphorylates 5-amino-1-(beta-D-ribosyl)imidazole (AIRs) to form 5-amino-1-(5-phospho-beta-D-ribosyl)imidazole (AIR), an important intermediate in the purine and thiamine biosynthetic pathways. It allows the use of exogenous aminoimidazole riboside (AIRs) to satisfy the cellular requirement for purines and thiamine. In Salmonella typhimurium (strain LT2 / SGSC1412 / ATCC 700720), this protein is Aminoimidazole riboside kinase.